The chain runs to 290 residues: Diaminopimelate epimerase (290 aa).

Asn-17, Gln-49, and Asn-69 together coordinate substrate. Catalysis depends on Cys-78, which acts as the Proton donor. Substrate-binding positions include 79-80 (GN), Asn-166, Asn-199, and 217-218 (ER). Cys-226 serves as the catalytic Proton acceptor. 227–228 (GS) contributes to the substrate binding site.

It belongs to the diaminopimelate epimerase family. As to quaternary structure, homodimer.

It is found in the cytoplasm. It catalyses the reaction (2S,6S)-2,6-diaminopimelate = meso-2,6-diaminopimelate. The protein operates within amino-acid biosynthesis; L-lysine biosynthesis via DAP pathway; DL-2,6-diaminopimelate from LL-2,6-diaminopimelate: step 1/1. Its function is as follows. Catalyzes the stereoinversion of LL-2,6-diaminopimelate (L,L-DAP) to meso-diaminopimelate (meso-DAP), a precursor of L-lysine and an essential component of the bacterial peptidoglycan. The polypeptide is Diaminopimelate epimerase (Afipia carboxidovorans (strain ATCC 49405 / DSM 1227 / KCTC 32145 / OM5) (Oligotropha carboxidovorans)).